The chain runs to 431 residues: UDP-N-acetylglucosamine 1-carboxyvinyltransferase (431 aa).

Residue 22–23 (KN) participates in phosphoenolpyruvate binding. Arginine 93 is a UDP-N-acetyl-alpha-D-glucosamine binding site. The Proton donor role is filled by cysteine 117. 2-(S-cysteinyl)pyruvic acid O-phosphothioketal is present on cysteine 117. UDP-N-acetyl-alpha-D-glucosamine contacts are provided by aspartate 307 and valine 329.

The protein belongs to the EPSP synthase family. MurA subfamily.

The protein localises to the cytoplasm. The catalysed reaction is phosphoenolpyruvate + UDP-N-acetyl-alpha-D-glucosamine = UDP-N-acetyl-3-O-(1-carboxyvinyl)-alpha-D-glucosamine + phosphate. Its pathway is cell wall biogenesis; peptidoglycan biosynthesis. Functionally, cell wall formation. Adds enolpyruvyl to UDP-N-acetylglucosamine. This chain is UDP-N-acetylglucosamine 1-carboxyvinyltransferase, found in Nitrosococcus oceani (strain ATCC 19707 / BCRC 17464 / JCM 30415 / NCIMB 11848 / C-107).